The primary structure comprises 429 residues: Saccharopine dehydrogenase-like oxidoreductase (429 aa).

A2 carries the N-acetylalanine modification. S217 carries the phosphoserine modification.

This sequence belongs to the saccharopine dehydrogenase family.

In Homo sapiens (Human), this protein is Saccharopine dehydrogenase-like oxidoreductase (SCCPDH).